Consider the following 264-residue polypeptide: Thymidylate synthase (264 aa).

Arg-21 is a binding site for dUMP. Position 51 (His-51) interacts with (6R)-5,10-methylene-5,6,7,8-tetrahydrofolate. Residue Arg-126–Arg-127 participates in dUMP binding. The Nucleophile role is filled by Cys-146. Residues Arg-166–Asp-169, Asn-177, and His-207–Tyr-209 each bind dUMP. (6R)-5,10-methylene-5,6,7,8-tetrahydrofolate is bound at residue Asp-169. Ala-263 is a binding site for (6R)-5,10-methylene-5,6,7,8-tetrahydrofolate.

This sequence belongs to the thymidylate synthase family. Bacterial-type ThyA subfamily. As to quaternary structure, homodimer.

It is found in the cytoplasm. It carries out the reaction dUMP + (6R)-5,10-methylene-5,6,7,8-tetrahydrofolate = 7,8-dihydrofolate + dTMP. The protein operates within pyrimidine metabolism; dTTP biosynthesis. In terms of biological role, catalyzes the reductive methylation of 2'-deoxyuridine-5'-monophosphate (dUMP) to 2'-deoxythymidine-5'-monophosphate (dTMP) while utilizing 5,10-methylenetetrahydrofolate (mTHF) as the methyl donor and reductant in the reaction, yielding dihydrofolate (DHF) as a by-product. This enzymatic reaction provides an intracellular de novo source of dTMP, an essential precursor for DNA biosynthesis. The protein is Thymidylate synthase of Cronobacter sakazakii (strain ATCC BAA-894) (Enterobacter sakazakii).